Here is a 330-residue protein sequence, read N- to C-terminus: Tryptophan--tRNA ligase (330 aa).

ATP is bound by residues 10-12 and 18-19; these read QAT and GN. Residues 11-19 carry the 'HIGH' region motif; the sequence is ATGSLHLGN. Asp134 is an L-tryptophan binding site. Residues 146 to 148, Ile186, and 195 to 199 contribute to the ATP site; these read GED and KMSKS. The 'KMSKS' region motif lies at 195-199; it reads KMSKS.

It belongs to the class-I aminoacyl-tRNA synthetase family. As to quaternary structure, homodimer.

The protein resides in the cytoplasm. The enzyme catalyses tRNA(Trp) + L-tryptophan + ATP = L-tryptophyl-tRNA(Trp) + AMP + diphosphate + H(+). In terms of biological role, catalyzes the attachment of tryptophan to tRNA(Trp). This Rickettsia conorii (strain ATCC VR-613 / Malish 7) protein is Tryptophan--tRNA ligase.